Consider the following 948-residue polypeptide: Isoleucine--tRNA ligase (948 aa).

The 'HIGH' region motif lies at 58 to 68 (PYANGDIHIGH). Residue glutamate 566 coordinates L-isoleucyl-5'-AMP. The 'KMSKS' region motif lies at 607 to 611 (KMSKS). Lysine 610 lines the ATP pocket. 4 residues coordinate Zn(2+): cysteine 911, cysteine 914, cysteine 931, and cysteine 934.

It belongs to the class-I aminoacyl-tRNA synthetase family. IleS type 1 subfamily. In terms of assembly, monomer. Requires Zn(2+) as cofactor.

It localises to the cytoplasm. The enzyme catalyses tRNA(Ile) + L-isoleucine + ATP = L-isoleucyl-tRNA(Ile) + AMP + diphosphate. Functionally, catalyzes the attachment of isoleucine to tRNA(Ile). As IleRS can inadvertently accommodate and process structurally similar amino acids such as valine, to avoid such errors it has two additional distinct tRNA(Ile)-dependent editing activities. One activity is designated as 'pretransfer' editing and involves the hydrolysis of activated Val-AMP. The other activity is designated 'posttransfer' editing and involves deacylation of mischarged Val-tRNA(Ile). This is Isoleucine--tRNA ligase from Vibrio vulnificus (strain CMCP6).